Consider the following 245-residue polypeptide: 1-(5-phosphoribosyl)-5-[(5-phosphoribosylamino)methylideneamino] imidazole-4-carboxamide isomerase (245 aa).

The active-site Proton acceptor is aspartate 8. Catalysis depends on aspartate 129, which acts as the Proton donor.

The protein belongs to the HisA/HisF family.

Its subcellular location is the cytoplasm. It catalyses the reaction 1-(5-phospho-beta-D-ribosyl)-5-[(5-phospho-beta-D-ribosylamino)methylideneamino]imidazole-4-carboxamide = 5-[(5-phospho-1-deoxy-D-ribulos-1-ylimino)methylamino]-1-(5-phospho-beta-D-ribosyl)imidazole-4-carboxamide. It participates in amino-acid biosynthesis; L-histidine biosynthesis; L-histidine from 5-phospho-alpha-D-ribose 1-diphosphate: step 4/9. The sequence is that of 1-(5-phosphoribosyl)-5-[(5-phosphoribosylamino)methylideneamino] imidazole-4-carboxamide isomerase from Geotalea uraniireducens (strain Rf4) (Geobacter uraniireducens).